Here is a 514-residue protein sequence, read N- to C-terminus: Peptide chain release factor 3 (514 aa).

In terms of domain architecture, tr-type G spans 8 to 268; sequence KKRRTFAIIS…TFLEFAPEPH (261 aa). GTP-binding positions include 17–24, 85–89, and 139–142; these read SHPDAGKT, DTPGH, and NKLD.

Belongs to the TRAFAC class translation factor GTPase superfamily. Classic translation factor GTPase family. PrfC subfamily.

The protein resides in the cytoplasm. Its function is as follows. Increases the formation of ribosomal termination complexes and stimulates activities of RF-1 and RF-2. It binds guanine nucleotides and has strong preference for UGA stop codons. It may interact directly with the ribosome. The stimulation of RF-1 and RF-2 is significantly reduced by GTP and GDP, but not by GMP. The polypeptide is Peptide chain release factor 3 (Streptococcus pyogenes serotype M5 (strain Manfredo)).